The sequence spans 157 residues: Selenoprotein F (157 aa).

The N-terminal stretch at 1 to 19 (MSGEVYILWLLSLIQTLSA) is a signal peptide. Sec-84 is a non-standard amino acid (selenocysteine).

It belongs to the selenoprotein M/F family. As to expression, expressed in the brain, liver and retina. Localized to the retinal ganglion cell layer, the inner nuclear layer and the outer nuclear layer at both parr and smolt stages.

The protein localises to the endoplasmic reticulum lumen. Its function is as follows. May be involved in redox reactions associated with the formation of disulfide bonds. May contribute to the quality control of protein folding in the endoplasmic reticulum. May be involved in retinal development. This chain is Selenoprotein F, found in Oncorhynchus mykiss (Rainbow trout).